Reading from the N-terminus, the 451-residue chain is Tubulin gamma-1 chain (451 aa).

Residue Ser131 is modified to Phosphoserine; by BRSK1. GTP is bound at residue 142 to 148 (AGGTGSG).

Belongs to the tubulin family. Component of the gamma-tubulin ring complex (gTuRC) consisting of TUBGCP2, TUBGCP3, TUBGCP4, TUBGCP5 and TUBGCP6 and gamma-tubulin TUBG1 or TUBG2. TUBGCP2, TUBGCP3, TUBGCP4, TUBGCP5 and TUBGCP6 assemble in a 5:5:2:1:1 stoichiometry; each is associated with a gamma-tubulin, thereby arranging 14 gamma-tubulins in a helical manner. Gamma-tubulin at the first position is blocked by TUBGCP3 at the last position, allowing 13 protafilaments to grow into a microtubule. The gTuRC (via TUBGCP3 and TUBGCP6) interacts with ACTB and MZT1; the interactions form a luminal bridge that stabilizes the initial structure during complex assembly. The gTuRC (via TUBGCP2) interacts with MZT2A/MZT2B and CDK5RAP2 (via CM1 motif); the interactions play a role in gTuRC activation. Interacts with alpha-beta tubulin heterodimers; the interaction allows microtubules to nucleate from the gTuRC. Interacts with B9D2. Interacts with CDK5RAP2; the interaction is leading to centrosomal localization of TUBG1 and CDK5RAP2. Interacts with CIMAP3. Interacts with SAS6 and NUP62 at the centrosome. Interacts with EML3 (phosphorylated at 'Thr-881') and HAUS8. Interacts with DNM2; this interaction may participate in centrosome cohesion. Interacts with CCDC66. Phosphorylation at Ser-131 by BRSK1 regulates centrosome duplication, possibly by mediating relocation of gamma-tubulin and its associated proteins from the cytoplasm to the centrosome.

The protein resides in the cytoplasm. It is found in the cytoskeleton. It localises to the microtubule organizing center. Its subcellular location is the centrosome. The protein localises to the spindle. Its function is as follows. Tubulin is the major constituent of microtubules, protein filaments consisting of alpha- and beta-tubulin heterodimers. Gamma-tubulin is a key component of the gamma-tubulin ring complex (gTuRC) which mediates microtubule nucleation. The gTuRC regulates the minus-end nucleation of alpha-beta tubulin heterodimers that grow into microtubule protafilaments, a critical step in centrosome duplication and spindle formation. This is Tubulin gamma-1 chain from Canis lupus familiaris (Dog).